A 356-amino-acid polypeptide reads, in one-letter code: 3-dehydroquinate synthase (356 aa).

NAD(+) is bound by residues 106–110, 130–131, K143, K152, and 170–173; these read GVVGD, TS, and FLKT. Positions 185, 246, and 263 each coordinate Zn(2+).

The protein belongs to the sugar phosphate cyclases superfamily. Dehydroquinate synthase family. The cofactor is NAD(+). Requires Co(2+) as cofactor. It depends on Zn(2+) as a cofactor.

Its subcellular location is the cytoplasm. It catalyses the reaction 7-phospho-2-dehydro-3-deoxy-D-arabino-heptonate = 3-dehydroquinate + phosphate. It functions in the pathway metabolic intermediate biosynthesis; chorismate biosynthesis; chorismate from D-erythrose 4-phosphate and phosphoenolpyruvate: step 2/7. Functionally, catalyzes the conversion of 3-deoxy-D-arabino-heptulosonate 7-phosphate (DAHP) to dehydroquinate (DHQ). This chain is 3-dehydroquinate synthase, found in Clostridium acetobutylicum (strain ATCC 824 / DSM 792 / JCM 1419 / IAM 19013 / LMG 5710 / NBRC 13948 / NRRL B-527 / VKM B-1787 / 2291 / W).